We begin with the raw amino-acid sequence, 141 residues long: VLSAADKTNVKSAFSKIGGQADEYGAETLERMFATYPQTKTYFPHFDLGKGSAQVKAHGKKVAAALVEAANAVDDIAGALSKLSDLHAQKLRVDPVNFKLLGQCFLVTVATHNPSLLTPEVHASLDKFLCAVGTVLTAKYR.

The region spanning 1–141 (VLSAADKTNV…VGTVLTAKYR (141 aa)) is the Globin domain. His58 lines the O2 pocket. Residue His87 participates in heme b binding.

Belongs to the globin family. As to quaternary structure, heterotetramer of two alpha chains and two beta chains. As to expression, red blood cells.

Functionally, involved in oxygen transport from the lung to the various peripheral tissues. The sequence is that of Hemoglobin subunit alpha-A (HBAA) from Turdus merula (Common blackbird).